We begin with the raw amino-acid sequence, 303 residues long: UDP-N-acetylenolpyruvoylglucosamine reductase (303 aa).

Positions 27 to 207 (KVGGISQVFY…TSISQKLQKI (181 aa)) constitute an FAD-binding PCMH-type domain. R175 is an active-site residue. S224 acts as the Proton donor in catalysis. E294 is an active-site residue.

It belongs to the MurB family. The cofactor is FAD.

It is found in the cytoplasm. It catalyses the reaction UDP-N-acetyl-alpha-D-muramate + NADP(+) = UDP-N-acetyl-3-O-(1-carboxyvinyl)-alpha-D-glucosamine + NADPH + H(+). The protein operates within cell wall biogenesis; peptidoglycan biosynthesis. Cell wall formation. In Orientia tsutsugamushi (strain Boryong) (Rickettsia tsutsugamushi), this protein is UDP-N-acetylenolpyruvoylglucosamine reductase.